Reading from the N-terminus, the 473-residue chain is Aspartyl/glutamyl-tRNA(Asn/Gln) amidotransferase subunit B (473 aa).

Belongs to the GatB/GatE family. GatB subfamily. In terms of assembly, heterotrimer of A, B and C subunits.

It carries out the reaction L-glutamyl-tRNA(Gln) + L-glutamine + ATP + H2O = L-glutaminyl-tRNA(Gln) + L-glutamate + ADP + phosphate + H(+). The catalysed reaction is L-aspartyl-tRNA(Asn) + L-glutamine + ATP + H2O = L-asparaginyl-tRNA(Asn) + L-glutamate + ADP + phosphate + 2 H(+). Allows the formation of correctly charged Asn-tRNA(Asn) or Gln-tRNA(Gln) through the transamidation of misacylated Asp-tRNA(Asn) or Glu-tRNA(Gln) in organisms which lack either or both of asparaginyl-tRNA or glutaminyl-tRNA synthetases. The reaction takes place in the presence of glutamine and ATP through an activated phospho-Asp-tRNA(Asn) or phospho-Glu-tRNA(Gln). This chain is Aspartyl/glutamyl-tRNA(Asn/Gln) amidotransferase subunit B, found in Francisella tularensis subsp. mediasiatica (strain FSC147).